We begin with the raw amino-acid sequence, 262 residues long: Sepiapterin reductase (262 aa).

The residue at position 1 (methionine 1) is an N-acetylmethionine. Residues 15–21 (GASRGFG) and 43–44 (RS) each bind NADP(+). A Phosphoserine modification is found at serine 46. 70-71 (DL) contacts NADP(+). Substrate contacts are provided by residues 158–159 (SL) and tyrosine 171. Position 175 (lysine 175) interacts with NADP(+). Residue serine 196 is modified to Phosphoserine. Residue glycine 200 coordinates substrate. Position 202–207 (202–207 (LDTDMQ)) interacts with NADP(+). Serine 214 carries the phosphoserine modification. Aspartate 258 is a substrate binding site.

Belongs to the sepiapterin reductase family. As to quaternary structure, homodimer.

It localises to the cytoplasm. It carries out the reaction L-erythro-7,8-dihydrobiopterin + NADP(+) = L-sepiapterin + NADPH + H(+). It catalyses the reaction (6R)-L-erythro-5,6,7,8-tetrahydrobiopterin + 2 NADP(+) = 6-pyruvoyl-5,6,7,8-tetrahydropterin + 2 NADPH + 2 H(+). The catalysed reaction is (S)-benzoin + NADP(+) = benzil + NADPH + H(+). In terms of biological role, catalyzes the final one or two reductions in tetra-hydrobiopterin biosynthesis to form 5,6,7,8-tetrahydrobiopterin. The enzyme also catalyzes the reduction of benzil to (S)-benzoin. The protein is Sepiapterin reductase (SPR) of Meriones unguiculatus (Mongolian jird).